Consider the following 88-residue polypeptide: UPF0335 protein WRi_003770 (88 aa).

This sequence belongs to the UPF0335 family.

The chain is UPF0335 protein WRi_003770 from Wolbachia sp. subsp. Drosophila simulans (strain wRi).